The chain runs to 815 residues: Vacuolar proton translocating ATPase 100 kDa subunit (815 aa).

The Cytoplasmic portion of the chain corresponds to 1–402 (MSFLRPSIWR…NAYGIAHYRE (402 aa)). The helical transmembrane segment at 403 to 421 (VNPAVLTIVTFPFLFGVMF) threads the bilayer. Over 422–423 (GD) the chain is Vacuolar. A helical transmembrane segment spans residues 424-440 (VGHGALLLLSALGLISL). Residues 441–454 (EKKLAGKKLNELIQ) lie on the Cytoplasmic side of the membrane. The chain crosses the membrane as a helical span at residues 455–484 (MPFDGRYVLFLMSLFSIYVGFIYNECFSIP). Residues 485–530 (MNIFGSQYNLNSTTGLYTYQHTDRVYPVGVDPLWKGAPNELVYYNS) lie on the Vacuolar side of the membrane. A helical transmembrane segment spans residues 531-550 (FKMKLSIIFGVVQMSVGICF). The Cytoplasmic segment spans residues 551–571 (SLLNYLNQKGPIKIVNILTQF). Residues 572 to 592 (VPQMIFLWSIFGYMSVLIILK) form a helical membrane-spanning segment. The Vacuolar segment spans residues 593 to 639 (WVVPYRSFEVDKVDPPFILPTIIAMFLSPGGTPDVVFFSGQGAVQTA). A helical membrane pass occupies residues 640–659 (LLFLALISIPVMLVIKPLFM). The Cytoplasmic portion of the chain corresponds to 660–706 (KRFHFQEVERKKLGHHEEEHDDEALYTGHHGEEFEMGEVFVHQVIHT). The helical transmembrane segment at 707 to 731 (IEFVLGAVSNTASYLRLWALSLAHS) threads the bilayer. Residues 732–749 (ELSSVFWERILIGQVERG) are Vacuolar-facing. Residues 750 to 788 (NPFLAFVGFGAWLGASVAVLLLMESLSAFLHALRLHWVE) form a helical membrane-spanning segment. Over 789-815 (FQNKFYIGDGVRFIPYSATRILSEDDE) the chain is Cytoplasmic.

The protein belongs to the V-ATPase 116 kDa subunit family. As to quaternary structure, the V-ATPase is a heteromultimeric enzyme.

It localises to the cytoplasmic vesicle membrane. The protein localises to the endosome membrane. Its subcellular location is the vacuole membrane. The protein resides in the lysosome membrane. In terms of biological role, essential component of the vacuolar proton pump (V-ATPase), a multimeric enzyme that catalyzes the translocation of protons across the membranes. Required for assembly and activity of the V-ATPase. Required in both the contractile vacuole system and the endosomal/lysosomal system. Also required for cytosolic pH regulation. The polypeptide is Vacuolar proton translocating ATPase 100 kDa subunit (vatM) (Dictyostelium discoideum (Social amoeba)).